The following is a 273-amino-acid chain: MGVYHADALVIRSREYGESDRLLTLFSREYGKIQAVAKGVRKPKSRQRAGAQLFTYAEYLLHKGKSLDTVNQVSPRESFPHLWTDLDMSMAATAMAELLDLATLPGQPHPELFTLTFSSLFLVESCDPALVQCTYALKLMNYLGYRPRLVECAECGQRVQGERLLFSPDAGGVVCRQCQTQGSSPAVGRWVSGGSLGLMRQLLQGELEKLNRLRWNQWSKKEILEASQYFCEQTLDKSLRSWSMGNRLVNVGQNPSGKDDLNERRDVDGTGES.

The disordered stretch occupies residues 250–273 (NVGQNPSGKDDLNERRDVDGTGES). The segment covering 257 to 273 (GKDDLNERRDVDGTGES) has biased composition (basic and acidic residues).

This sequence belongs to the RecO family.

Functionally, involved in DNA repair and RecF pathway recombination. In Desulfitobacterium hafniense (strain Y51), this protein is DNA repair protein RecO.